Here is a 422-residue protein sequence, read N- to C-terminus: MDFKQIKSNVEKVKFLRKDFPILNKKFDNKYIIYFDNAATSQKPKNVIYSNVEYYENYNANVHRSGHKFAIQSSIKIEKTRELVKNFINAESAKNIIFTSGTTDGINTIASSFFYSKYFKKKDEIILTTLEHNSNLLPWVNLANLANLKIKLAKFNEMGIITPEEIEKLITEKTKLISISGINNTLGTINDLESIGKIAKKYNICLFVDAAQMAPHIKIDVKKIGCDFLVFSGHKMLAPTGIGILYISNNMAEKLHSSKLGGNTVEEIFIENEKIKFKASDSPNKFESGTPNIAGIIGLEEAIKYIDNISMDFILEHDKQLIEYGVKKLQELDEVEFILNTNLKRNSIISFTVKNIHSHDIETYLDTMGIATRAGRTCSYVAFFPENLNKDHLLRISFYFYNTQEEIDNFILGLKKVIKELS.

K235 bears the N6-(pyridoxal phosphate)lysine mark.

It belongs to the class-V pyridoxal-phosphate-dependent aminotransferase family. Csd subfamily. The cofactor is pyridoxal 5'-phosphate.

The enzyme catalyses (sulfur carrier)-H + L-cysteine = (sulfur carrier)-SH + L-alanine. Its function is as follows. Catalyzes the removal of elemental sulfur and selenium atoms from L-cysteine, L-cystine, L-selenocysteine, and L-selenocystine to produce L-alanine. In Borreliella burgdorferi (strain ATCC 35210 / DSM 4680 / CIP 102532 / B31) (Borrelia burgdorferi), this protein is Probable cysteine desulfurase (csd).